The primary structure comprises 424 residues: Adenylosuccinate synthetase (424 aa).

Residues 12-18 (GDEGKGK) and 40-42 (GHT) contribute to the GTP site. Asp-13 acts as the Proton acceptor in catalysis. Mg(2+) contacts are provided by Asp-13 and Gly-40. IMP-binding positions include 13–16 (DEGK), 38–41 (NAGH), Thr-130, Arg-144, Asn-220, Thr-235, and Arg-299. His-41 functions as the Proton donor in the catalytic mechanism. Position 295-301 (295-301 (VTTGRKR)) interacts with substrate. GTP is bound by residues Arg-301, 327 to 329 (KLD), and 412 to 414 (GTG).

It belongs to the adenylosuccinate synthetase family. Homodimer. Requires Mg(2+) as cofactor.

Its subcellular location is the cytoplasm. It catalyses the reaction IMP + L-aspartate + GTP = N(6)-(1,2-dicarboxyethyl)-AMP + GDP + phosphate + 2 H(+). The protein operates within purine metabolism; AMP biosynthesis via de novo pathway; AMP from IMP: step 1/2. Functionally, plays an important role in the de novo pathway and in the salvage pathway of purine nucleotide biosynthesis. Catalyzes the first committed step in the biosynthesis of AMP from IMP. The chain is Adenylosuccinate synthetase (adB) from Emericella nidulans (strain FGSC A4 / ATCC 38163 / CBS 112.46 / NRRL 194 / M139) (Aspergillus nidulans).